A 518-amino-acid polypeptide reads, in one-letter code: D-aminopeptidase (518 aa).

Ser62 serves as the catalytic Nucleophile. Lys65 acts as the Proton donor/acceptor in catalysis. Residues 373–392 (FGTGPEKMDISGENEAQSSM) are disordered. The important for specificity stretch occupies residues 477–487 (QRSMDAPSPGE). Asp481 contributes to the substrate binding site.

It belongs to the peptidase S12 family. Homodimer.

The enzyme catalyses Release of an N-terminal D-amino acid from a peptide, Xaa-|-Yaa-, in which Xaa is preferably D-Ala, D-Ser or D-Thr. D-amino acid amides and methyl esters also are hydrolyzed, as is glycine amide.. With respect to regulation, inhibited by beta-lactam compounds such as 6-aminopenicillic acid, 7-aminocephalosporanic acid, benzylpenicillin and ampicillin. Inhibited by p-chloromercuribenzoate. Functionally, hydrolyzes N-terminal residues in D-amino acid-containing peptides. This chain is D-aminopeptidase, found in Brucella melitensis biotype 2 (strain ATCC 23457).